The sequence spans 435 residues: Monodehydroascorbate reductase 4, cytosolic (435 aa).

Residues 14–17, Glu41, Arg48, Lys53, Ile96, and 147–148 contribute to the FAD site; these read GGVA and RD. Residues 172–178, Glu196, Arg202, and Gly261 each bind NAD(+); that span reads GGYIGLE. 174–178 contacts NADP(+); sequence YIGLE. NADP(+)-binding residues include Arg202 and Gly261. An FAD-binding site is contributed by Asp298. 314–315 contacts NAD(+); sequence EH. 314-315 provides a ligand contact to NADP(+); it reads EH. Val316 is a binding site for FAD. Arg320 is an L-ascorbate binding site. Tyr349 is an FAD binding site. Residue Tyr349 coordinates NAD(+). Tyr349 contacts NADP(+). Residue Arg351 coordinates L-ascorbate.

This sequence belongs to the FAD-dependent oxidoreductase family. The cofactor is FAD. As to expression, expressed in anthers.

It is found in the cytoplasm. It carries out the reaction 2 monodehydro-L-ascorbate radical + NADH + H(+) = 2 L-ascorbate + NAD(+). Its function is as follows. Catalyzes the conversion of monodehydroascorbate to ascorbate, oxidizing NADH in the process. Ascorbate is a major antioxidant against reactive oxygen species (ROS) and nitric oxide (NO). The protein is Monodehydroascorbate reductase 4, cytosolic of Oryza sativa subsp. japonica (Rice).